The chain runs to 122 residues: Large ribosomal subunit protein uL14 (122 aa).

It belongs to the universal ribosomal protein uL14 family. In terms of assembly, part of the 50S ribosomal subunit. Forms a cluster with proteins L3 and L19. In the 70S ribosome, L14 and L19 interact and together make contacts with the 16S rRNA in bridges B5 and B8.

Its function is as follows. Binds to 23S rRNA. Forms part of two intersubunit bridges in the 70S ribosome. This Streptococcus thermophilus (strain CNRZ 1066) protein is Large ribosomal subunit protein uL14.